A 624-amino-acid chain; its full sequence is Bifunctional protein ArgH (624 aa).

The tract at residues 1 to 466 (MALWGGRFSQ…QERDNAGVKV (466 aa)) is argininosuccinate lyase. The 151-residue stretch at 464-614 (VKVRPARLTD…DEVALEVNLQ (151 aa)) folds into the N-acetyltransferase domain. A probable acetyltransferase region spans residues 467–624 (RPARLTDLDA…EQVIIKSSVA (158 aa)).

In the N-terminal section; belongs to the lyase 1 family. Argininosuccinate lyase subfamily.

It is found in the cytoplasm. The enzyme catalyses 2-(N(omega)-L-arginino)succinate = fumarate + L-arginine. It functions in the pathway amino-acid biosynthesis; L-arginine biosynthesis; L-arginine from L-ornithine and carbamoyl phosphate: step 3/3. This is Bifunctional protein ArgH (argH) from Aliivibrio fischeri (strain ATCC 700601 / ES114) (Vibrio fischeri).